We begin with the raw amino-acid sequence, 76 residues long: Putative snRNP Sm-like protein (76 aa).

Residues 4 to 76 enclose the Sm domain; that stretch reads RPLDVIHKSL…VLALSPVELE (73 aa).

It belongs to the snRNP Sm proteins family.

The polypeptide is Putative snRNP Sm-like protein (Thermococcus kodakarensis (strain ATCC BAA-918 / JCM 12380 / KOD1) (Pyrococcus kodakaraensis (strain KOD1))).